A 645-amino-acid polypeptide reads, in one-letter code: ATP-dependent zinc metalloprotease FtsH 1 (645 aa).

At 1-6 (MRSTQK) the chain is on the cytoplasmic side. The helical transmembrane segment at 7–27 (TLALWFFLIIMAVFLFQAYES) threads the bilayer. The Periplasmic portion of the chain corresponds to 28–110 (KQQKAIADFN…NYERADNGGF (83 aa)). A helical transmembrane segment spans residues 111-131 (FQSLLVNWLPLILIVAMFLFI). Residues 132–645 (MRQIQAGGGK…PVGNTGPVTI (514 aa)) are Cytoplasmic-facing. An ATP-binding site is contributed by 203–210 (GSPGTGKT). H425 is a binding site for Zn(2+). E426 is a catalytic residue. 2 residues coordinate Zn(2+): H429 and D501.

In the central section; belongs to the AAA ATPase family. It in the C-terminal section; belongs to the peptidase M41 family. In terms of assembly, homohexamer. Zn(2+) is required as a cofactor.

Its subcellular location is the cell inner membrane. Functionally, acts as a processive, ATP-dependent zinc metallopeptidase for both cytoplasmic and membrane proteins. Plays a role in the quality control of integral membrane proteins. In Bdellovibrio bacteriovorus (strain ATCC 15356 / DSM 50701 / NCIMB 9529 / HD100), this protein is ATP-dependent zinc metalloprotease FtsH 1.